Reading from the N-terminus, the 108-residue chain is Nucleoid-associated protein Avin_19840 (108 aa).

This sequence belongs to the YbaB/EbfC family. As to quaternary structure, homodimer.

Its subcellular location is the cytoplasm. It localises to the nucleoid. In terms of biological role, binds to DNA and alters its conformation. May be involved in regulation of gene expression, nucleoid organization and DNA protection. The protein is Nucleoid-associated protein Avin_19840 of Azotobacter vinelandii (strain DJ / ATCC BAA-1303).